Reading from the N-terminus, the 380-residue chain is MTPLRKTNPLMKLINHSLVDLPAPSNISMWWNLGSLLGTCLVLQIVTGLFLAMHYTPDASMAFSSVAHITRDVNYGWVIRYLHANGASMFFICLFLHIGRGLYYGSFLYLETWNIGIILLLATMATAFMGYVLPWGQMSFWGATVITNLLSAVPYIGTDLVQWVWGGYSVDNATLTRFFTFHFILPFIITALVALHLLFLHETGSNNPLGISSQPDKITFHPYYTTKDILGLFLLLLTLMSLVLFSPDLLGDPDNYIQANPLSTPPHIKPEWYFLFAYAILRSVPNKLGGVLALLLSILILMTIPMLHTAKQQSMMFRPLSQLTYWLWAANLLTLTWIGGQPVSYPFITIGQVTSVLYFITILILVPTASLIENKMLKWT.

Transmembrane regions (helical) follow at residues 33 to 53, 77 to 98, 113 to 133, and 178 to 198; these read LGSL…FLAM, WVIR…FLHI, WNIG…GYVL, and FFTF…LHLL. 2 residues coordinate heme b: H83 and H97. H182 and H196 together coordinate heme b. Residue H201 participates in a ubiquinone binding. A run of 4 helical transmembrane segments spans residues 226-246, 288-308, 320-340, and 347-367; these read TKDI…VLFS, LGGV…PMLH, LSQL…WIGG, and FITI…ILVP.

This sequence belongs to the cytochrome b family. As to quaternary structure, the cytochrome bc1 complex contains 11 subunits: 3 respiratory subunits (MT-CYB, CYC1 and UQCRFS1), 2 core proteins (UQCRC1 and UQCRC2) and 6 low-molecular weight proteins (UQCRH/QCR6, UQCRB/QCR7, UQCRQ/QCR8, UQCR10/QCR9, UQCR11/QCR10 and a cleavage product of UQCRFS1). This cytochrome bc1 complex then forms a dimer. Requires heme b as cofactor.

The protein resides in the mitochondrion inner membrane. In terms of biological role, component of the ubiquinol-cytochrome c reductase complex (complex III or cytochrome b-c1 complex) that is part of the mitochondrial respiratory chain. The b-c1 complex mediates electron transfer from ubiquinol to cytochrome c. Contributes to the generation of a proton gradient across the mitochondrial membrane that is then used for ATP synthesis. This Nomascus leucogenys (Northern white-cheeked gibbon) protein is Cytochrome b (MT-CYB).